A 534-amino-acid polypeptide reads, in one-letter code: 5,6-dihydroxyindole-2-carboxylic acid oxidase (534 aa).

The N-terminal stretch at 1–23 (MLGPATFLPLTAALLLLIPGGRA) is a signal peptide. Over 24-477 (QFPRQCVTPE…WPSRALNFTE (454 aa)) the chain is Lumenal, melanosome. Intrachain disulfides connect Cys29–Cys40, Cys41–Cys65, Cys56–Cys99, Cys101–Cys110, and Cys113–Cys122. 2 N-linked (GlcNAc...) asparagine glycosylation sites follow: Asn96 and Asn104. Asn175 and Asn181 each carry an N-linked (GlcNAc...) asparagine glycan. Zn(2+) contacts are provided by His192, His215, and His224. 2 disulfides stabilise this stretch: Cys258–Cys261 and Cys290–Cys303. N-linked (GlcNAc...) asparagine glycans are attached at residues Asn304 and Asn350. Residues His377 and His381 each contribute to the Zn(2+) site. N-linked (GlcNAc...) asparagine glycosylation is present at Asn385. A Zn(2+)-binding site is contributed by His404. A helical membrane pass occupies residues 478–501 (IITIAVVAALVLVAVIFAAASCAV). Over 502–534 (HRSRKDDVHQPLLGEQYPRYSEEYERDASQSAV) the chain is Cytoplasmic.

This sequence belongs to the tyrosinase family. The cofactor is Cu(2+). Zn(2+) is required as a cofactor.

The protein localises to the melanosome membrane. The catalysed reaction is 2 5,6-dihydroxyindole-2-carboxylate + O2 = 2 indole-5,6-quinone-2-carboxylate + 2 H2O. Its pathway is pigment biosynthesis; melanin biosynthesis. Plays a role in melanin biosynthesis. Catalyzes the oxidation of 5,6-dihydroxyindole-2-carboxylic acid (DHICA) into indole-5,6-quinone-2-carboxylic acid. May regulate or influence the type of melanin synthesized. Also to a lower extent, capable of hydroxylating tyrosine and producing melanin. In Ambystoma mexicanum (Axolotl), this protein is 5,6-dihydroxyindole-2-carboxylic acid oxidase (TYRP1).